Consider the following 365-residue polypeptide: Phospho-N-acetylmuramoyl-pentapeptide-transferase (365 aa).

The next 10 helical transmembrane spans lie at 2–22, 51–71, 80–100, 118–138, 167–187, 196–216, 234–254, 256–276, 277–297, and 340–360; these read ISLIIGIMVSLVVTIVGTPLL, TLGGVVINLAVVLGWCSSALY, PSWSAVLVLFAMLSMGFLGFI, GKFIGQFILATIYAVLALILP, VAIVLFVIWVNFLMTAWTNAI, LAAGSSMIAFIGYAIIAFWEF, PLDLTIIAACAAVACFGFLWY, SNPASIFMGDTGSLALGGLFA, AMSIATHTEFLAIILGGLFVI, and FWMIEMLFVLIALVLFYGDWV.

This sequence belongs to the glycosyltransferase 4 family. MraY subfamily. Requires Mg(2+) as cofactor.

Its subcellular location is the cell membrane. The catalysed reaction is UDP-N-acetyl-alpha-D-muramoyl-L-alanyl-gamma-D-glutamyl-meso-2,6-diaminopimeloyl-D-alanyl-D-alanine + di-trans,octa-cis-undecaprenyl phosphate = di-trans,octa-cis-undecaprenyl diphospho-N-acetyl-alpha-D-muramoyl-L-alanyl-D-glutamyl-meso-2,6-diaminopimeloyl-D-alanyl-D-alanine + UMP. It functions in the pathway cell wall biogenesis; peptidoglycan biosynthesis. Catalyzes the initial step of the lipid cycle reactions in the biosynthesis of the cell wall peptidoglycan: transfers peptidoglycan precursor phospho-MurNAc-pentapeptide from UDP-MurNAc-pentapeptide onto the lipid carrier undecaprenyl phosphate, yielding undecaprenyl-pyrophosphoryl-MurNAc-pentapeptide, known as lipid I. The sequence is that of Phospho-N-acetylmuramoyl-pentapeptide-transferase from Bifidobacterium adolescentis (strain ATCC 15703 / DSM 20083 / NCTC 11814 / E194a).